The following is a 237-amino-acid chain: Ribosomal RNA small subunit methyltransferase G (237 aa).

The tract at residues 1–25 is disordered; the sequence is MASRHSPQTAAQPDAADKAQALRLT. Low complexity predominate over residues 7-21; it reads PQTAAQPDAADKAQA. S-adenosyl-L-methionine is bound by residues Gly85, Phe90, and Arg155.

The protein belongs to the methyltransferase superfamily. RNA methyltransferase RsmG family.

The protein resides in the cytoplasm. The catalysed reaction is guanosine(527) in 16S rRNA + S-adenosyl-L-methionine = N(7)-methylguanosine(527) in 16S rRNA + S-adenosyl-L-homocysteine. Specifically methylates the N7 position of guanine in position 527 of 16S rRNA. The chain is Ribosomal RNA small subunit methyltransferase G from Rhodopseudomonas palustris (strain HaA2).